Reading from the N-terminus, the 771-residue chain is Receptor like protein 22 (771 aa).

An N-terminal signal peptide occupies residues 1 to 20 (MSNLRLRLLSLVSILYCIAA). At 21–729 (LRCRPDQTET…EEEEILEWRA (709 aa)) the chain is on the extracellular side. 6 N-linked (GlcNAc...) asparagine glycosylation sites follow: asparagine 46, asparagine 58, asparagine 80, asparagine 93, asparagine 134, and asparagine 158. LRR repeat units lie at residues 86 to 110 (LSHLRYLNLSFNNFDSSPLSSAFGQ), 112 to 135 (NNLEVLLLSSNGFTGQVPSSIRNL), 136 to 159 (TKLTQLNLPHNKLTGDLPSLVQNL), 160 to 183 (TKLLALDLSYNQFSGTIPSSFFTM), 185 to 206 (FLSYLDLSENHLTGSFEISNSS), 207 to 230 (SKLENLNLGNNHFETEIIDPVLRL), 232 to 254 (NLRYLSLSFLNTSHPIDLSIFSP), 255 to 281 (LQSLTHLDLHGNSLTLTSVYSDIDFPK), 283 to 303 (MEILLLSGCNISEFPRFLKSL), 304 to 327 (KKLWYLDLSSNRIKGNVPDWIWSL), 329 to 350 (LLVSLDLSNNSFTGFNGSLDHV), and 353 to 377 (NSSVQVLDIALNSFKGSFPNPPVSI). N-linked (GlcNAc...) asparagine glycosylation occurs at asparagine 204. Asparagine 242 is a glycosylation site (N-linked (GlcNAc...) asparagine). N-linked (GlcNAc...) asparagine glycosylation occurs at asparagine 292. Residues asparagine 337, asparagine 344, asparagine 353, asparagine 379, asparagine 384, asparagine 397, asparagine 410, asparagine 421, asparagine 466, and asparagine 481 are each glycosylated (N-linked (GlcNAc...) asparagine). The LRR 13; degenerate repeat unit spans residues 378–397 (INLSAWNNSFTGDIPLSVCN). LRR repeat units lie at residues 398–419 (RTSLDVLDLSYNNFTGSIPPCM), 420–443 (GNFTIVNLRKNKLEGNIPDEFYSG), 445–467 (LTQTLDVGYNQLTGELPRSLLNC), 469–491 (FIRFLSVDHNRINDSFPLWLKAL), 492–516 (PNLKVLTLRSNSFHGPMSPPDDQSS), 519–543 (FPKLQILEISHNRFTGSLPTNYFAN), 588–612 (LTFYSAIDFSGNKLEGEIPESIGLL), 613–636 (KTLIALNLSNNSFTGHIPMSFANV), 637–660 (TELESLDLSGNKLSGEIPQELGRL), and 662–685 (YLAYIDVSDNQLTGKIPQGTQIIG). Asparagine 543 carries N-linked (GlcNAc...) asparagine glycosylation. Asparagine 619, asparagine 622, and asparagine 635 each carry an N-linked (GlcNAc...) asparagine glycan. The helical transmembrane segment at 730–750 (AAIGYGPGVLFGLAIGHVVAL) threads the bilayer. Topologically, residues 751-771 (YKPGWFIKNNGQNRLRGIRHP) are cytoplasmic.

This sequence belongs to the RLP family.

It is found in the cell membrane. This is Receptor like protein 22 from Arabidopsis thaliana (Mouse-ear cress).